The following is a 700-amino-acid chain: Acyl-coenzyme A oxidase 3 (700 aa).

Belongs to the acyl-CoA oxidase family. Heteropentamer composed of five different subunits. FAD serves as cofactor.

It localises to the peroxisome. The catalysed reaction is a 2,3-saturated acyl-CoA + O2 = a (2E)-enoyl-CoA + H2O2. It functions in the pathway lipid metabolism; peroxisomal fatty acid beta-oxidation. Its function is as follows. Oxidizes aliphatic acyl-CoA substrates of different chain lengths such as hexanoyl-CoA, decanoyl-CoA and myristoyl-CoA as well as aromatic/heterocyclic ring-substituted chromogenic substrates, such as furylpropionyl-CoA. Of the above substrates, the efficiency of the enzyme, exhibits the following order: decanoyl-CoA &gt; myristoyl-CoA &gt; hexanoyl-CoA &gt; furyl-propionyl-CoA. The chain is Acyl-coenzyme A oxidase 3 (POX3) from Yarrowia lipolytica (strain CLIB 122 / E 150) (Yeast).